Consider the following 98-residue polypeptide: uncharacterized protein (98 aa).

A compositionally biased stretch (basic residues) spans 19–31 (RRMSKRSKNKAKK). Positions 19–47 (RRMSKRSKNKAKKERVPVEDRPPTPMPTS) are disordered.

Belongs to the lymphocryptovirus BNLF2B family.

This is an uncharacterized protein from Epstein-Barr virus (strain AG876) (HHV-4).